Reading from the N-terminus, the 326-residue chain is DNA-directed RNA polymerase subunit alpha (326 aa).

Residues 1–231 (MQTALLKPKI…DQLSVFAALE (231 aa)) form an alpha N-terminal domain (alpha-NTD) region. Residues 247–326 (IDPILLRPVD…ENWPPAGLEK (80 aa)) form an alpha C-terminal domain (alpha-CTD) region.

It belongs to the RNA polymerase alpha chain family. Homodimer. The RNAP catalytic core consists of 2 alpha, 1 beta, 1 beta' and 1 omega subunit. When a sigma factor is associated with the core the holoenzyme is formed, which can initiate transcription.

The enzyme catalyses RNA(n) + a ribonucleoside 5'-triphosphate = RNA(n+1) + diphosphate. Its function is as follows. DNA-dependent RNA polymerase catalyzes the transcription of DNA into RNA using the four ribonucleoside triphosphates as substrates. The chain is DNA-directed RNA polymerase subunit alpha from Cupriavidus metallidurans (strain ATCC 43123 / DSM 2839 / NBRC 102507 / CH34) (Ralstonia metallidurans).